The sequence spans 64 residues: MSGREGGKKKPLKAPKKEQSEMDEDTAAFKAKQKEQQKALEAAKQKATKGGPLLQGGIKKSGKK.

The segment at 1–64 is disordered; the sequence is MSGREGGKKK…QGGIKKSGKK (64 aa). Residues 21 to 50 are a coiled coil; it reads EMDEDTAAFKAKQKEQQKALEAAKQKATKG. Residues 32 to 44 show a composition bias toward basic and acidic residues; that stretch reads KQKEQQKALEAAK.

This sequence belongs to the TMA7 family.

This is Translation machinery-associated protein 7 homolog from Anopheles gambiae (African malaria mosquito).